The chain runs to 702 residues: MEGFLTDQQREMMKVATQTADDLPPSQKPHSVLLEHLPKPSGGGKASGASNAVKHRRSHAGRSIRSKKDGGGGKGNWGKLIDTDGDYHIDPNDPNYDSGEEPFELVGATLSDPLDDYKKAAASIINEYFSTGDVDVAAADLIELGSSEYHPYFIKRLVSVAMDRHDKEKEMASVLLSALYADVINPNQIRDGFVLLLESADDFVVDIPDAVNVLALFLARAVVDDILPPAFLPRAAKALPITSKGYQVVQTAEKSYLSAAHHAELVERRWGGQTRTTVEEVKKKIADILNEYVETGETYEACRCVRELGVSFFHHEVVKRALVTALENHAAEAPVLKLLNEAASENLISSSQMVKGFSRLRESLDDLALDIPSARTKFGLIVPKAVSGGWLDASFGYPSGECGRQQNEDEKLKRFKEDIVTIIHEYFNSDDIPELIRSLEDLGAPEYNPIFLKKLITLALDRKNHEKEMASVLLSSLHIEMFTTEDVADGFVMLLESAEDTALDILDASNELALFLARAVIDDVLAPFNLEEISSKLRPNSSGTETVKMARSLIFARHAGERLLRCWGGGSGWAVEDAKDKISNLLEEYESSGLVSEACKCIHELGMPFFNHEVVKKALVMGMEKKKDKMMLDLLQESFSEGLITTNQMTKGFTRVKDGLEDLALDIPNAKEKFNDYVEYGKKNGWVSSSFLTSLTEDANVG.

The disordered stretch occupies residues 1–100 (MEGFLTDQQR…PNDPNYDSGE (100 aa)). Positions 53–65 (VKHRRSHAGRSIR) are enriched in basic residues. The span at 81–91 (IDTDGDYHIDP) shows a compositional bias: basic and acidic residues. Residues 116-237 (DYKKAAASII…PPAFLPRAAK (122 aa)) form the MI 1 domain. Positions 267–274 (ERRWGGQT) match the Nuclear localization signal 1 motif. MI domains lie at 280–401 (EVKK…PSGE), 414–535 (RFKE…EISS), and 577–697 (DAKD…SLTE). The Nuclear localization signal 2 signature appears at 615-622 (VKKALVMG).

The protein belongs to the PDCD4 family. As to quaternary structure, interacts with EIN2, ETR2 and EIN4. Binds to EIF4A1. The association with ribosomes is modulated by cellular energy status and TOR activity. As to expression, mostly expressed in vegetative tissues, such as leaves and stems, and, to a lower extent, in roots and reproductive tissues, such as flower buds and flowers. Expressed in seedlings, roots, cauline leaf tips and flowers.

Its subcellular location is the nucleus. The protein localises to the cytoplasm. It is found in the cytosol. In terms of biological role, involved in target of rapamycin (TOR)-regulated translation control, especially under energy-deficient conditions. Involved in the regulation of the ethylene-mediated signaling pathway. Involved in salt stress responses. Reduced cotyledons size and early flowering. The polypeptide is MA3 DOMAIN-CONTAINING TRANSLATION REGULATORY FACTOR 3 (Arabidopsis thaliana (Mouse-ear cress)).